The primary structure comprises 24 residues: Glutathione S-transferase (24 aa).

Belongs to the GST superfamily. In terms of assembly, monomer and homodimer.

The protein localises to the cytoplasm. It catalyses the reaction RX + glutathione = an S-substituted glutathione + a halide anion + H(+). Functionally, conjugation of reduced glutathione to a wide number of exogenous and endogenous hydrophobic electrophiles. The protein is Glutathione S-transferase of Pseudomonas sp. (strain CF600).